Reading from the N-terminus, the 673-residue chain is UvrABC system protein B (673 aa).

The region spanning 26 to 183 (ANFEAGLAKQ…RHLTDLQYTR (158 aa)) is the Helicase ATP-binding domain. ATP is bound at residue 39–46 (GVTGSGKT). The Beta-hairpin motif lies at 92 to 115 (YYDYYQPEAYVPSSDTFIEKDSSI). The region spanning 431-597 (QVDDLMSEIH…SVERPISDIM (167 aa)) is the Helicase C-terminal domain. The tract at residues 601–631 (REDAAEKKSGKGRSKSRQVAEETPDYRAMKP) is disordered. A compositionally biased stretch (basic and acidic residues) spans 618–630 (QVAEETPDYRAMK). The 36-residue stretch at 635 to 670 (AGKLKSLEQKMYQHAKDLEFEAAAQIRDQIQKLKTA) folds into the UVR domain.

It belongs to the UvrB family. Forms a heterotetramer with UvrA during the search for lesions. Interacts with UvrC in an incision complex.

The protein resides in the cytoplasm. Functionally, the UvrABC repair system catalyzes the recognition and processing of DNA lesions. A damage recognition complex composed of 2 UvrA and 2 UvrB subunits scans DNA for abnormalities. Upon binding of the UvrA(2)B(2) complex to a putative damaged site, the DNA wraps around one UvrB monomer. DNA wrap is dependent on ATP binding by UvrB and probably causes local melting of the DNA helix, facilitating insertion of UvrB beta-hairpin between the DNA strands. Then UvrB probes one DNA strand for the presence of a lesion. If a lesion is found the UvrA subunits dissociate and the UvrB-DNA preincision complex is formed. This complex is subsequently bound by UvrC and the second UvrB is released. If no lesion is found, the DNA wraps around the other UvrB subunit that will check the other stand for damage. This chain is UvrABC system protein B, found in Xanthomonas oryzae pv. oryzae (strain MAFF 311018).